A 211-amino-acid polypeptide reads, in one-letter code: Outer-membrane lipoprotein carrier protein (211 aa).

The signal sequence occupies residues 1–24 (MNTIKILIGLLGIFLFSLSGIVSA).

Belongs to the LolA family. As to quaternary structure, monomer.

The protein localises to the periplasm. Functionally, participates in the translocation of lipoproteins from the inner membrane to the outer membrane. Only forms a complex with a lipoprotein if the residue after the N-terminal Cys is not an aspartate (The Asp acts as a targeting signal to indicate that the lipoprotein should stay in the inner membrane). The sequence is that of Outer-membrane lipoprotein carrier protein from Coxiella burnetii (strain CbuK_Q154) (Coxiella burnetii (strain Q154)).